Reading from the N-terminus, the 61-residue chain is MKMFFTVLVTLFVCSMIIGICEGREIPVKCKGSKQCLQSCKEAGMTYGKCMNGKCNCTPKG.

An N-terminal signal peptide occupies residues 1 to 23 (MKMFFTVLVTLFVCSMIIGICEG). Cystine bridges form between cysteine 30-cysteine 50, cysteine 36-cysteine 55, and cysteine 40-cysteine 57. The residue at position 60 (lysine 60) is a Lysine amide.

As to expression, expressed by the venom gland.

The protein resides in the secreted. Functionally, inhibits voltage-gated potassium channel rKv1.1/KCNA1 at nanomolar ranges (IC(50)=90 +-2 nM, reduction of current by 30% at 50 nM or toxin). In Mesobuthus eupeus (Lesser Asian scorpion), this protein is Potassium channel toxin alpha-KTx 3.18.